Reading from the N-terminus, the 78-residue chain is D-alanyl carrier protein (78 aa).

In terms of domain architecture, Carrier spans 1–78 (MDVENTVVEI…KIIAKAKELQ (78 aa)). Position 36 is an O-(pantetheine 4'-phosphoryl)serine (serine 36).

Belongs to the DltC family. Post-translationally, 4'-phosphopantetheine is transferred from CoA to a specific serine of apo-DCP.

It localises to the cytoplasm. The protein operates within cell wall biogenesis; lipoteichoic acid biosynthesis. Carrier protein involved in the D-alanylation of lipoteichoic acid (LTA). The loading of thioester-linked D-alanine onto DltC is catalyzed by D-alanine--D-alanyl carrier protein ligase DltA. The DltC-carried D-alanyl group is further transferred to cell membrane phosphatidylglycerol (PG) by forming an ester bond, probably catalyzed by DltD. D-alanylation of LTA plays an important role in modulating the properties of the cell wall in Gram-positive bacteria, influencing the net charge of the cell wall. The polypeptide is D-alanyl carrier protein (Latilactobacillus sakei subsp. sakei (strain 23K) (Lactobacillus sakei subsp. sakei)).